We begin with the raw amino-acid sequence, 1172 residues long: Carbamoyl phosphate synthase arginine-specific large chain, chloroplastic (1172 aa).

Positions 1-10 (MATSLSSAPT) are enriched in polar residues. Residues 1–37 (MATSLSSAPTQLRPSPSPSHHRLLHRSSLLPFPRRHH) form a disordered region. Residues 1-50 (MATSLSSAPTQLRPSPSPSHHRLLHRSSLLPFPRRHHHRRRRCGALSIAR) constitute a chloroplast transit peptide. The tract at residues 72-473 (GRLAGVRKIM…SFQKAVRSLE (402 aa)) is carboxyphosphate synthetic domain. ATP-binding residues include R199, R240, G246, G247, K279, L281, E286, G312, V313, H314, Q356, and E370. The ATP-grasp 1 domain maps to 203–399 (KQAMDRIGLK…IAKMAAKLSV (197 aa)). 3 residues coordinate Mg(2+): Q356, E370, and N372. The tract at residues 474 to 623 (TGFAGWGCAP…YSSYEYECES (150 aa)) is oligomerization domain. The carbamoyl phosphate synthetic domain stretch occupies residues 624–1019 (VPTNKKKVLI…GAFAKAQIAA (396 aa)). The ATP-grasp 2 domain occupies 761 to 954 (NAILEELGIE…LAKYASLVMS (194 aa)). ATP contacts are provided by R797, K836, L838, E843, G869, I870, H871, S872, Q912, and E925. Mg(2+)-binding residues include Q912, E925, and N927. The segment at 1020 to 1172 (GQKLPLNGTV…QNLQAAQSAS (153 aa)) is allosteric domain. The MGS-like domain occupies 1021–1162 (QKLPLNGTVF…QDYFQTTDAS (142 aa)).

Belongs to the CarB family. Heterodimer composed of 2 chains; the small (or glutamine) chain promotes the hydrolysis of glutamine to ammonia, which is used by the large (or ammonia) chain to synthesize carbamoyl phosphate. Mg(2+) serves as cofactor. Requires Mn(2+) as cofactor.

It localises to the plastid. Its subcellular location is the chloroplast. The enzyme catalyses hydrogencarbonate + L-glutamine + 2 ATP + H2O = carbamoyl phosphate + L-glutamate + 2 ADP + phosphate + 2 H(+). The catalysed reaction is hydrogencarbonate + NH4(+) + 2 ATP = carbamoyl phosphate + 2 ADP + phosphate + 2 H(+). It functions in the pathway amino-acid biosynthesis; L-arginine biosynthesis; carbamoyl phosphate from bicarbonate: step 1/1. Its function is as follows. Large subunit of the arginine-specific carbamoyl phosphate synthase (CPSase). CPSase catalyzes the formation of carbamoyl phosphate from the ammonia moiety of glutamine, hydrogencarbonate, and phosphate donated by ATP, constituting the first step of 2 biosynthetic pathways, one leading to arginine and/or urea and the other to pyrimidine nucleotides. The large subunit (synthetase) binds the substrates ammonia (free or transferred from glutamine from the small subunit), hydrogencarbonate and ATP and carries out an ATP-coupled ligase reaction, activating hydrogencarbonate by forming carboxy phosphate which reacts with ammonia to form carbamoyl phosphate. This Oryza sativa subsp. japonica (Rice) protein is Carbamoyl phosphate synthase arginine-specific large chain, chloroplastic (CARB).